A 40-amino-acid chain; its full sequence is Sapecin-C (40 aa).

Cystine bridges form between Cys-3–Cys-30, Cys-16–Cys-36, and Cys-20–Cys-38.

It belongs to the invertebrate defensin family. Type 1 subfamily. In terms of tissue distribution, hemocytes and fat body.

It is found in the secreted. Sapecins, which are potent bactericidal proteins, are produced in response to injury. Sapecin C is cytotoxic to Gram-positive bacteria. The sequence is that of Sapecin-C from Sarcophaga peregrina (Flesh fly).